The following is a 302-amino-acid chain: Ornithine carbamoyltransferase (302 aa).

Carbamoyl phosphate-binding positions include 53–56 (STRT), Gln-80, Arg-104, and 131–134 (HPCQ). Residues Asn-162, Asp-219, and 223-224 (SM) each bind L-ornithine. Residues 259-260 (CL) and Arg-287 each bind carbamoyl phosphate.

This sequence belongs to the aspartate/ornithine carbamoyltransferase superfamily. OTCase family.

The protein localises to the cytoplasm. It catalyses the reaction carbamoyl phosphate + L-ornithine = L-citrulline + phosphate + H(+). It functions in the pathway amino-acid biosynthesis; L-arginine biosynthesis; L-arginine from L-ornithine and carbamoyl phosphate: step 1/3. In terms of biological role, reversibly catalyzes the transfer of the carbamoyl group from carbamoyl phosphate (CP) to the N(epsilon) atom of ornithine (ORN) to produce L-citrulline. The sequence is that of Ornithine carbamoyltransferase from Hydrogenovibrio crunogenus (strain DSM 25203 / XCL-2) (Thiomicrospira crunogena).